Reading from the N-terminus, the 104-residue chain is Large ribosomal subunit protein uL24 (104 aa).

The protein belongs to the universal ribosomal protein uL24 family. In terms of assembly, part of the 50S ribosomal subunit.

In terms of biological role, one of two assembly initiator proteins, it binds directly to the 5'-end of the 23S rRNA, where it nucleates assembly of the 50S subunit. Its function is as follows. One of the proteins that surrounds the polypeptide exit tunnel on the outside of the subunit. This is Large ribosomal subunit protein uL24 from Herminiimonas arsenicoxydans.